We begin with the raw amino-acid sequence, 272 residues long: 4-diphosphocytidyl-2-C-methyl-D-erythritol kinase (272 aa).

The active site involves K14. 92–102 (PMGGGLGGGSS) lines the ATP pocket. Residue D132 is part of the active site.

Belongs to the GHMP kinase family. IspE subfamily.

The catalysed reaction is 4-CDP-2-C-methyl-D-erythritol + ATP = 4-CDP-2-C-methyl-D-erythritol 2-phosphate + ADP + H(+). It functions in the pathway isoprenoid biosynthesis; isopentenyl diphosphate biosynthesis via DXP pathway; isopentenyl diphosphate from 1-deoxy-D-xylulose 5-phosphate: step 3/6. Its function is as follows. Catalyzes the phosphorylation of the position 2 hydroxy group of 4-diphosphocytidyl-2C-methyl-D-erythritol. The sequence is that of 4-diphosphocytidyl-2-C-methyl-D-erythritol kinase from Fervidobacterium nodosum (strain ATCC 35602 / DSM 5306 / Rt17-B1).